The sequence spans 218 residues: Large ribosomal subunit protein uL3 (218 aa).

The interval 127 to 167 is disordered; that stretch reads GFSRGPMSHGSKNHREPGSTGAGTTPGRIYPGKRMAGRYGG.

This sequence belongs to the universal ribosomal protein uL3 family. Part of the 50S ribosomal subunit. Forms a cluster with proteins L14 and L19.

In terms of biological role, one of the primary rRNA binding proteins, it binds directly near the 3'-end of the 23S rRNA, where it nucleates assembly of the 50S subunit. In Prochlorococcus marinus (strain MIT 9303), this protein is Large ribosomal subunit protein uL3.